Consider the following 440-residue polypeptide: 26S proteasome regulatory subunit 4 (440 aa).

Residues 1 to 13 (MGQSQSGGHGPGG) are compositionally biased toward gly residues. The tract at residues 1–49 (MGQSQSGGHGPGGGKKDDKDKKKKYEPPVPTRVGKKKKKTKGPDAASKL) is disordered. G2 is lipidated: N-myristoyl glycine. S4 is subject to Phosphoserine. The span at 14 to 26 (GKKDDKDKKKKYE) shows a compositional bias: basic and acidic residues. T53 carries the post-translational modification Phosphothreonine. A disordered region spans residues 84-104 (QMKPLEEKQEEERSKVDDLRG). Over residues 86 to 103 (KPLEEKQEEERSKVDDLR) the composition is skewed to basic and acidic residues. 226-233 (GPPGTGKT) lines the ATP pocket. K237 is covalently cross-linked (Glycyl lysine isopeptide (Lys-Gly) (interchain with G-Cter in ubiquitin)). N6-acetyllysine is present on K258. T434 carries the phosphothreonine modification. Position 439 is a phosphotyrosine (Y439).

Belongs to the AAA ATPase family. Component of the 19S proteasome regulatory particle complex. The 26S proteasome consists of a 20S core particle (CP) and two 19S regulatory subunits (RP). The regulatory particle is made of a lid composed of 9 subunits, a base containing 6 ATPases including PSMC1 and few additional components. Interacts with SCA7. Interacts with NGLY1. Interacts with PAAF1.

It is found in the cytoplasm. The protein localises to the nucleus. The protein resides in the membrane. Functionally, component of the 26S proteasome, a multiprotein complex involved in the ATP-dependent degradation of ubiquitinated proteins. This complex plays a key role in the maintenance of protein homeostasis by removing misfolded or damaged proteins, which could impair cellular functions, and by removing proteins whose functions are no longer required. Therefore, the proteasome participates in numerous cellular processes, including cell cycle progression, apoptosis, or DNA damage repair. PSMC1 belongs to the heterohexameric ring of AAA (ATPases associated with diverse cellular activities) proteins that unfolds ubiquitinated target proteins that are concurrently translocated into a proteolytic chamber and degraded into peptides. In Homo sapiens (Human), this protein is 26S proteasome regulatory subunit 4 (PSMC1).